We begin with the raw amino-acid sequence, 508 residues long: Bifunctional purine biosynthesis protein PurH (508 aa).

An MGS-like domain is found at 1 to 145; that stretch reads MAKKALISVS…KNYKYVTILV (145 aa).

Belongs to the PurH family.

It catalyses the reaction (6R)-10-formyltetrahydrofolate + 5-amino-1-(5-phospho-beta-D-ribosyl)imidazole-4-carboxamide = 5-formamido-1-(5-phospho-D-ribosyl)imidazole-4-carboxamide + (6S)-5,6,7,8-tetrahydrofolate. It carries out the reaction IMP + H2O = 5-formamido-1-(5-phospho-D-ribosyl)imidazole-4-carboxamide. It functions in the pathway purine metabolism; IMP biosynthesis via de novo pathway; 5-formamido-1-(5-phospho-D-ribosyl)imidazole-4-carboxamide from 5-amino-1-(5-phospho-D-ribosyl)imidazole-4-carboxamide (10-formyl THF route): step 1/1. It participates in purine metabolism; IMP biosynthesis via de novo pathway; IMP from 5-formamido-1-(5-phospho-D-ribosyl)imidazole-4-carboxamide: step 1/1. This chain is Bifunctional purine biosynthesis protein PurH, found in Thermoanaerobacter sp. (strain X514).